The sequence spans 222 residues: Putative metal transport protein MJ1569 (222 aa).

The next 6 membrane-spanning stretches (helical) occupy residues 3-23, 39-59, 81-101, 102-122, 135-155, and 180-200; these read IPDG…MIPI, LPLL…NLPV, WVAT…FGDG, GITC…FVGY, VIAS…VAGF, and AFAH…IVVW.

Belongs to the CbiM family.

It localises to the cell membrane. Its function is as follows. May be involved in metal transport. The chain is Putative metal transport protein MJ1569 from Methanocaldococcus jannaschii (strain ATCC 43067 / DSM 2661 / JAL-1 / JCM 10045 / NBRC 100440) (Methanococcus jannaschii).